A 31-amino-acid chain; its full sequence is Cytochrome b6-f complex subunit 6 (31 aa).

Residues 4 to 26 (ITSYFGFLLAASTITPALFIGLS) form a helical membrane-spanning segment.

It belongs to the PetL family. As to quaternary structure, the 4 large subunits of the cytochrome b6-f complex are cytochrome b6, subunit IV (17 kDa polypeptide, PetD), cytochrome f and the Rieske protein, while the 4 small subunits are PetG, PetL, PetM and PetN. The complex functions as a dimer.

The protein resides in the plastid. Its subcellular location is the chloroplast thylakoid membrane. Component of the cytochrome b6-f complex, which mediates electron transfer between photosystem II (PSII) and photosystem I (PSI), cyclic electron flow around PSI, and state transitions. PetL is important for photoautotrophic growth as well as for electron transfer efficiency and stability of the cytochrome b6-f complex. The polypeptide is Cytochrome b6-f complex subunit 6 (Buxus microphylla (Littleleaf boxwood)).